Consider the following 410-residue polypeptide: Peptidase T (410 aa).

His-79 is a Zn(2+) binding site. The active site involves Asp-81. Asp-142 provides a ligand contact to Zn(2+). Glu-176 acts as the Proton acceptor in catalysis. Glu-177, Asp-199, and His-381 together coordinate Zn(2+).

It belongs to the peptidase M20B family. Zn(2+) serves as cofactor.

Its subcellular location is the cytoplasm. It carries out the reaction Release of the N-terminal residue from a tripeptide.. In terms of biological role, cleaves the N-terminal amino acid of tripeptides. The sequence is that of Peptidase T (pepT) from Bacillus subtilis (strain 168).